Here is a 217-residue protein sequence, read N- to C-terminus: Probable GTP-binding protein EngB (217 aa).

One can recognise an EngB-type G domain in the interval D40–G217. Residues G48–S55, G75–E79, D95–G98, T162–D165, and T196–S198 each bind GTP. Residues S55 and T77 each contribute to the Mg(2+) site.

Belongs to the TRAFAC class TrmE-Era-EngA-EngB-Septin-like GTPase superfamily. EngB GTPase family. Requires Mg(2+) as cofactor.

Its function is as follows. Necessary for normal cell division and for the maintenance of normal septation. The protein is Probable GTP-binding protein EngB of Novosphingobium aromaticivorans (strain ATCC 700278 / DSM 12444 / CCUG 56034 / CIP 105152 / NBRC 16084 / F199).